Here is a 614-residue protein sequence, read N- to C-terminus: Kelch-like protein 40 (614 aa).

A BTB domain is found at I33 to E100. The 103-residue stretch at C135 to E237 folds into the BACK domain. 5 Kelch repeats span residues Q353–N405, S406–N455, L456–G503, K504–G550, and L552–L606.

The protein belongs to the KLHL40 family. Component of the BCR(KLHL40) E3 ubiquitin ligase complex.

The protein localises to the cytoplasm. It localises to the myofibril. The protein resides in the sarcomere. Its subcellular location is the a band. It is found in the i band. Its function is as follows. Substrate-specific adapter of a BCR (BTB-CUL3-RBX1) E3 ubiquitin ligase complex that acts as a key regulator of skeletal muscle development. This Xenopus laevis (African clawed frog) protein is Kelch-like protein 40 (klhl40).